We begin with the raw amino-acid sequence, 222 residues long: Probable transaldolase (222 aa).

The Schiff-base intermediate with substrate role is filled by K91.

Belongs to the transaldolase family. Type 3B subfamily.

Its subcellular location is the cytoplasm. The enzyme catalyses D-sedoheptulose 7-phosphate + D-glyceraldehyde 3-phosphate = D-erythrose 4-phosphate + beta-D-fructose 6-phosphate. The protein operates within carbohydrate degradation; pentose phosphate pathway; D-glyceraldehyde 3-phosphate and beta-D-fructose 6-phosphate from D-ribose 5-phosphate and D-xylulose 5-phosphate (non-oxidative stage): step 2/3. Functionally, transaldolase is important for the balance of metabolites in the pentose-phosphate pathway. In Chlorobium phaeovibrioides (strain DSM 265 / 1930) (Prosthecochloris vibrioformis (strain DSM 265)), this protein is Probable transaldolase.